Reading from the N-terminus, the 727-residue chain is Protein TITANIA (727 aa).

The segment at 1-136 (MFGDSDGSKD…LASLLQPVPA (136 aa)) is disordered. Residues 14 to 25 (GAPPSTTDPPFP) show a composition bias toward pro residues. The span at 67–88 (DDGKHCVERDFLHLSAPKRGDP) shows a compositional bias: basic and acidic residues. A compositionally biased stretch (low complexity) spans 104 to 117 (DSLQLSLSLNSDGP). A PHD-type zinc finger spans residues 406 to 470 (ACTCSVCHKF…QFQCLACNHS (65 aa)). Residues 629 to 697 (VKCKEAEAKL…LEELKMLENS (69 aa)) are a coiled coil.

As to expression, widely expressed.

The protein localises to the nucleus. Probable transcription factor that functions as a regulator of metal transporter genes responsible for essential metals delivery to shoots and normal plant growth. Required for the maintenance of metal transporter gene expression, such as IRT1, IRT2, ZIP1, ZIP9, NRAMP1 and NRAMP5. The polypeptide is Protein TITANIA (Oryza sativa subsp. japonica (Rice)).